Here is a 309-residue protein sequence, read N- to C-terminus: Tagatose-6-phosphate kinase (309 aa).

The protein belongs to the carbohydrate kinase PfkB family. LacC subfamily.

It catalyses the reaction D-tagatofuranose 6-phosphate + ATP = D-tagatofuranose 1,6-bisphosphate + ADP + H(+). Its pathway is carbohydrate metabolism; D-tagatose 6-phosphate degradation; D-glyceraldehyde 3-phosphate and glycerone phosphate from D-tagatose 6-phosphate: step 1/2. This is Tagatose-6-phosphate kinase from Streptococcus pyogenes serotype M5 (strain Manfredo).